Here is a 548-residue protein sequence, read N- to C-terminus: Transcriptional adapter ADA2a (548 aa).

Residues 1 to 30 (MGRSKLASRPAEEDLNPGKSKRKKISLGPE) form a disordered region. The ZZ-type zinc-finger motif lies at 48-104 (PGLYCCNYCDKDLSGLVRFKCAVCMDFDLCVECFSVGVELNRHKNSHPYRVMDNLSF). Zn(2+) is bound by residues cysteine 53, cysteine 56, cysteine 68, cysteine 71, cysteine 77, cysteine 80, histidine 90, and histidine 94. The 53-residue stretch at 106–158 (LVTSDWNADEEILLLEAIATYGFGNWKEVADHVGSKTTTECIKHFNSAYMQSP) folds into the SANT domain. Position 257 is an N6-acetyllysine; by GCN5 (lysine 257). A coiled-coil region spans residues 365–386 (QSKEEHKELIKKVIEEHQILRR). An SWIRM domain is found at 461-548 (PRIYSGLDTW…LVHKGIGDST (88 aa)).

As to quaternary structure, interacts in vitro with the HAT domain of GCN5 and with the DNA-binding domain of the transcriptional activator DREB1B/CBF1. Acetylated in vitro by GCN5, but acetylation is not essential for biological activity. As to expression, expressed in roots and leaves.

The protein resides in the nucleus. Its function is as follows. Required for the function of some acidic activation domains, which activate transcription from a distant site. The exact mechanism of action is not yet known. ADA2 stimulates the acetyltransferase activity of GCN5 on free histones or nucleosomes, probably by opening up the promoter region. This Arabidopsis thaliana (Mouse-ear cress) protein is Transcriptional adapter ADA2a (ADA2A).